Consider the following 748-residue polypeptide: Catalase-peroxidase (748 aa).

A cross-link (tryptophyl-tyrosyl-methioninium (Trp-Tyr) (with M-255)) is located at residues 96 to 229 (WHSAGTYRVA…LAAAHMGLIY (134 aa)). His-97 serves as the catalytic Proton acceptor. Positions 229 to 255 (YVNPEGPDGNPDPIAAAKDIRTTFGRM) form a cross-link, tryptophyl-tyrosyl-methioninium (Tyr-Met) (with W-96). His-270 contacts heme b.

The protein belongs to the peroxidase family. Peroxidase/catalase subfamily. Homodimer or homotetramer. Heme b is required as a cofactor. In terms of processing, formation of the three residue Trp-Tyr-Met cross-link is important for the catalase, but not the peroxidase activity of the enzyme.

The protein localises to the cytoplasm. It catalyses the reaction H2O2 + AH2 = A + 2 H2O. The enzyme catalyses 2 H2O2 = O2 + 2 H2O. Functionally, bifunctional enzyme with both catalase and broad-spectrum peroxidase activity. Plays a crucial role in oxidative stress response during infection. Acts as an antigen and elicits antibody response in P.marneffei-infected AIDS patients, healthy people working in mycological laboratory, and healthy people in an endemic area. This is Catalase-peroxidase from Talaromyces marneffei (Penicillium marneffei).